The chain runs to 550 residues: Arginine--tRNA ligase (550 aa).

Residues 130–140 (ANPTGPIHIGG) carry the 'HIGH' region motif.

This sequence belongs to the class-I aminoacyl-tRNA synthetase family. As to quaternary structure, monomer.

It localises to the cytoplasm. The catalysed reaction is tRNA(Arg) + L-arginine + ATP = L-arginyl-tRNA(Arg) + AMP + diphosphate. This chain is Arginine--tRNA ligase (argS), found in Mycobacterium tuberculosis (strain CDC 1551 / Oshkosh).